The sequence spans 245 residues: Probable transcriptional regulatory protein TP_0474 (245 aa).

It belongs to the TACO1 family.

It localises to the cytoplasm. This chain is Probable transcriptional regulatory protein TP_0474, found in Treponema pallidum (strain Nichols).